The sequence spans 119 residues: Large ribosomal subunit protein bL20 (119 aa).

It belongs to the bacterial ribosomal protein bL20 family.

Binds directly to 23S ribosomal RNA and is necessary for the in vitro assembly process of the 50S ribosomal subunit. It is not involved in the protein synthesizing functions of that subunit. In Halalkalibacterium halodurans (strain ATCC BAA-125 / DSM 18197 / FERM 7344 / JCM 9153 / C-125) (Bacillus halodurans), this protein is Large ribosomal subunit protein bL20.